A 206-amino-acid polypeptide reads, in one-letter code: MTDTPTKQETQSNKDNVPGAIPVEQKKNNRNDRKRNRRGDSKNLERDSDWQERVVQIRRVSKTVKGGKKMSFRAIVVVGNEKGQVGVGVGKAGDVIGAVRKGVSDGKKNLVRVPLTPNNSIPTLSKGRDGAANVLIRPAAPGTGVIAGGSIRTVLELAGIKNVLAKRLGSKTPLNNARAAMVALSQLRTHKSASRERGISLEQLYS.

Residues 1–15 are compositionally biased toward polar residues; that stretch reads MTDTPTKQETQSNKD. The tract at residues 1 to 50 is disordered; the sequence is MTDTPTKQETQSNKDNVPGAIPVEQKKNNRNDRKRNRRGDSKNLERDSDW. Residues 38 to 50 show a composition bias toward basic and acidic residues; the sequence is RGDSKNLERDSDW. The region spanning 50-113 is the S5 DRBM domain; that stretch reads WQERVVQIRR…SDGKKNLVRV (64 aa).

The protein belongs to the universal ribosomal protein uS5 family. As to quaternary structure, part of the 30S ribosomal subunit. Contacts proteins S4 and S8.

In terms of biological role, with S4 and S12 plays an important role in translational accuracy. Located at the back of the 30S subunit body where it stabilizes the conformation of the head with respect to the body. The chain is Small ribosomal subunit protein uS5 from Prochlorococcus marinus (strain MIT 9215).